A 292-amino-acid polypeptide reads, in one-letter code: MAKTDKVKIFFQHVMPKHLISRLIGKFAAARAGWFTQLFIRWFIRQYKIDMSEAIEESPKAYKTFNAFFTRHLKPELRPLEASESELAHPVDGAVSQLGDIENGRIFQAKGHDYSLQELLGGNEEDAKPFVDGKFATIYLAPKDYHRIHMPCDGVLKKMIYVPGDLYSVNPLTAANVPNLFARNERVVAIFDTEVGPMSLVLVGATIVASIGTVWSGTITPPTGGRIQSWSYPTSGHSAIHLKKGEEMGHFKLGSTVVLTFAKDAIEFNDELKPLSVTRMGEVMAEIKESDD.

Residues Asp92, His149, and Ser255 each act as charge relay system; for autoendoproteolytic cleavage activity in the active site. The active-site Schiff-base intermediate with substrate; via pyruvic acid; for decarboxylase activity is Ser255. Ser255 is modified (pyruvic acid (Ser); by autocatalysis).

The protein belongs to the phosphatidylserine decarboxylase family. PSD-B subfamily. Prokaryotic type I sub-subfamily. As to quaternary structure, heterodimer of a large membrane-associated beta subunit and a small pyruvoyl-containing alpha subunit. Pyruvate is required as a cofactor. Is synthesized initially as an inactive proenzyme. Formation of the active enzyme involves a self-maturation process in which the active site pyruvoyl group is generated from an internal serine residue via an autocatalytic post-translational modification. Two non-identical subunits are generated from the proenzyme in this reaction, and the pyruvate is formed at the N-terminus of the alpha chain, which is derived from the carboxyl end of the proenzyme. The autoendoproteolytic cleavage occurs by a canonical serine protease mechanism, in which the side chain hydroxyl group of the serine supplies its oxygen atom to form the C-terminus of the beta chain, while the remainder of the serine residue undergoes an oxidative deamination to produce ammonia and the pyruvoyl prosthetic group on the alpha chain. During this reaction, the Ser that is part of the protease active site of the proenzyme becomes the pyruvoyl prosthetic group, which constitutes an essential element of the active site of the mature decarboxylase.

It localises to the cell membrane. The catalysed reaction is a 1,2-diacyl-sn-glycero-3-phospho-L-serine + H(+) = a 1,2-diacyl-sn-glycero-3-phosphoethanolamine + CO2. It functions in the pathway phospholipid metabolism; phosphatidylethanolamine biosynthesis; phosphatidylethanolamine from CDP-diacylglycerol: step 2/2. Catalyzes the formation of phosphatidylethanolamine (PtdEtn) from phosphatidylserine (PtdSer). This chain is Phosphatidylserine decarboxylase proenzyme, found in Idiomarina loihiensis (strain ATCC BAA-735 / DSM 15497 / L2-TR).